The following is a 106-amino-acid chain: Pyruvate decarboxylase 2 (106 aa).

The Mg(2+) site is built by Asn-10 and Gly-12.

The protein belongs to the TPP enzyme family. Homotetramer. The cofactor is a metal cation. It depends on thiamine diphosphate as a cofactor.

The enzyme catalyses a 2-oxocarboxylate + H(+) = an aldehyde + CO2. The sequence is that of Pyruvate decarboxylase 2 (PDC2) from Zea mays (Maize).